The following is a 358-amino-acid chain: Transcriptional repressor protein KorB (358 aa).

Residues 1-42 are compositionally biased toward low complexity; that stretch reads MTAAQAKTTKKNTAAAAQEAAGAAQPSGLGLDSIGDLSSLLD. Disordered regions lie at residues 1-79 and 256-305; these read MTAA…FSPE and DPNT…DKLK. Acidic residues predominate over residues 275–285; it reads AGDGQDGEDGD. The span at 286-305 shows a compositional bias: basic and acidic residues; that stretch reads QDGKDAKEKGAKEPDPDKLK.

Belongs to the ParB family.

Its function is as follows. In conjunction with KorA, inhibits the transcription of the kilA, trfA and korAB operons. Is also involved in the negative control of the kilB operon. The protein is Transcriptional repressor protein KorB (korB) of Escherichia coli.